The following is a 300-amino-acid chain: Geranyl diphosphate 2-C-methyltransferase (300 aa).

A disordered region spans residues 1-24 (MAAASAPVPGPGGASSTARGRIPA).

Belongs to the geranyl diphosphate 2-C-methyltransferase family. Requires Mg(2+) as cofactor.

The catalysed reaction is (2E)-geranyl diphosphate + S-adenosyl-L-methionine = (E)-2-methylgeranyl diphosphate + S-adenosyl-L-homocysteine + H(+). Catalyzes the SAM-dependent methylation of geranyl diphosphate (GPP) to yield (E)-2-methylgeranyl diphosphate (2-MeGPP). This Streptomyces lasalocidi (Streptomyces lasaliensis) protein is Geranyl diphosphate 2-C-methyltransferase (gdpmt).